Reading from the N-terminus, the 152-residue chain is MKLNELYNNIGAKKNKKRVARGIGSGKGKTAGRGVKGQKSRAGVAIKGFEGGQTPMIKRLPKRGFNCISSKKYNVINIYNIEAAIAEERLNANDVITKEKLIEIGLINKSNKKLVKLLSICSDDFNYPLSFKLDSYSSKAKEIVEKAGGKLL.

Residues 18 to 37 (RVARGIGSGKGKTAGRGVKG) are disordered. Over residues 23 to 35 (IGSGKGKTAGRGV) the composition is skewed to gly residues.

Belongs to the universal ribosomal protein uL15 family. As to quaternary structure, part of the 50S ribosomal subunit.

Functionally, binds to the 23S rRNA. This Rickettsia bellii (strain OSU 85-389) protein is Large ribosomal subunit protein uL15.